The sequence spans 1299 residues: Cilia- and flagella-associated protein 251 (1299 aa).

A disordered region spans residues 1–351 (MSDTEENPLE…SQKPEDILAQ (351 aa)). Composition is skewed to acidic residues over residues 17 to 45 (EMEE…EEEE), 91 to 162 (EKEE…EEDA), and 176 to 189 (ESQE…EWVE). Basic and acidic residues predominate over residues 190–199 (KEEQREGEEV). The span at 212–228 (EEEGWEEEKSGEEEKSE) shows a compositional bias: acidic residues. Residues 229–257 (ESERSKERGGEEEGQEKEEAEHEGEREEG) show a composition bias toward basic and acidic residues. The span at 269 to 280 (REEEEEEEDTET) shows a compositional bias: acidic residues. Composition is skewed to basic and acidic residues over residues 281–297 (TETK…EKQN) and 331–351 (NSMK…ILAQ). 14 WD repeats span residues 484 to 526 (PVHT…IWKW), 534 to 574 (ACTL…CWFE), 585 to 624 (VLTE…VWDI), 643 to 678 (PRKL…FYDH), 681 to 741 (SVVN…VYHM), 745 to 785 (GTKL…VWDF), 791 to 828 (LFSR…ILDA), 838 to 874 (PFKY…MVVV), 881 to 924 (WEYL…EYNL), 935 to 975 (LDVH…LFNA), 981 to 1027 (RKTL…ILPV), 1033 to 1071 (KTCA…QWKI), 1109 to 1149 (YFYY…FYPS), and 1169 to 1209 (GKLI…GYTN).

It localises to the cytoplasm. The protein resides in the cytoskeleton. It is found in the cilium axoneme. Its subcellular location is the cell projection. The protein localises to the cilium. It localises to the flagellum. Involved in spermatozoa motility. May also regulate cilium motility through its role in the assembly of the axonemal radial spokes. This is Cilia- and flagella-associated protein 251 from Mus musculus (Mouse).